Consider the following 786-residue polypeptide: Diamine oxidase [copper-containing] 1, peroxisomal (786 aa).

419-430 (AFDAGEDGLGKN) is a substrate binding site. Asp-421 functions as the Proton acceptor in the catalytic mechanism. Residues Cys-440 and Cys-466 are joined by a disulfide bond. 502–507 (VANYEY) contacts substrate. Tyr-505 (schiff-base intermediate with substrate; via topaquinone) is an active-site residue. Tyr-505 carries the post-translational modification 2',4',5'-topaquinone. Cu cation contacts are provided by His-555 and His-557. Mn(2+) is bound by residues Asp-710 and Ile-711. His-721 serves as a coordination point for Cu cation.

It belongs to the copper/topaquinone oxidase family. Homodimer. Requires Cu cation as cofactor. It depends on Zn(2+) as a cofactor. L-topaquinone serves as cofactor. In terms of processing, topaquinone (TPQ) is generated by copper-dependent autoxidation of a specific tyrosyl residue. Mainly expressed in roots, and, to a lower extent, in leaves and stems.

It localises to the peroxisome. It catalyses the reaction a primary methyl amine + O2 + H2O = an aldehyde + H2O2 + NH4(+). The enzyme catalyses N-methylputrescine + O2 + H2O = 4-methylaminobutanal + H2O2 + NH4(+). The protein operates within alkaloid biosynthesis; nicotine biosynthesis. It participates in amine and polyamine degradation; putrescine degradation. In terms of biological role, involved in putrescine catabolism in peroxisomes. May also be involved in the biosynthesis of pyridine alkaloid natural products, leading mainly to the production of anabasine, anatabine, nicotine and nornicotine, effective deterrents against herbivores with antiparasitic and pesticide properties (neurotoxins); nornicotine serves as the precursor in the synthesis of the carcinogen compound N'-nitrosonornicotine (NNN). Oxidizes preferentially non-N-methylated amines. The chain is Diamine oxidase [copper-containing] 1, peroxisomal from Nicotiana tabacum (Common tobacco).